Reading from the N-terminus, the 317-residue chain is Protease HtpX homolog (317 aa).

Helical transmembrane passes span 6 to 26 and 28 to 48; these read TAIL…AIGG and GGMM…YWNS. His130 contacts Zn(2+). The active site involves Glu131. His134 contacts Zn(2+). 2 consecutive transmembrane segments (helical) span residues 145 to 165 and 173 to 193; these read MTAT…LFGG and PFGA…AMLV. Position 202 (Glu202) interacts with Zn(2+). The interval 283–317 is disordered; the sequence is GGGGFAPGPAPAVRPPGGNPWGVDPGGGQRRGPWG. Positions 290–300 are enriched in pro residues; sequence GPAPAVRPPGG. Positions 306-317 are enriched in gly residues; that stretch reads DPGGGQRRGPWG.

The protein belongs to the peptidase M48B family. Zn(2+) serves as cofactor.

The protein localises to the cell inner membrane. The protein is Protease HtpX homolog of Xanthobacter autotrophicus (strain ATCC BAA-1158 / Py2).